The following is a 124-amino-acid chain: UPF0231 protein Shewmr4_0656 (124 aa).

This sequence belongs to the UPF0231 family.

This is UPF0231 protein Shewmr4_0656 from Shewanella sp. (strain MR-4).